The sequence spans 531 residues: GMP synthase [glutamine-hydrolyzing] (531 aa).

The region spanning lysine 20–aspartate 213 is the Glutamine amidotransferase type-1 domain. Catalysis depends on cysteine 97, which acts as the Nucleophile. Active-site residues include histidine 187 and glutamate 189. Residues tryptophan 214 to arginine 406 enclose the GMPS ATP-PPase domain. Serine 241–alanine 247 serves as a coordination point for ATP.

In terms of assembly, homodimer.

It carries out the reaction XMP + L-glutamine + ATP + H2O = GMP + L-glutamate + AMP + diphosphate + 2 H(+). It functions in the pathway purine metabolism; GMP biosynthesis; GMP from XMP (L-Gln route): step 1/1. In terms of biological role, catalyzes the synthesis of GMP from XMP. This Afipia carboxidovorans (strain ATCC 49405 / DSM 1227 / KCTC 32145 / OM5) (Oligotropha carboxidovorans) protein is GMP synthase [glutamine-hydrolyzing].